A 556-amino-acid chain; its full sequence is 2-succinyl-5-enolpyruvyl-6-hydroxy-3-cyclohexene-1-carboxylate synthase (556 aa).

Belongs to the TPP enzyme family. MenD subfamily. Homodimer. Requires Mg(2+) as cofactor. Mn(2+) serves as cofactor. It depends on thiamine diphosphate as a cofactor.

It carries out the reaction isochorismate + 2-oxoglutarate + H(+) = 5-enolpyruvoyl-6-hydroxy-2-succinyl-cyclohex-3-ene-1-carboxylate + CO2. It participates in quinol/quinone metabolism; 1,4-dihydroxy-2-naphthoate biosynthesis; 1,4-dihydroxy-2-naphthoate from chorismate: step 2/7. It functions in the pathway quinol/quinone metabolism; menaquinone biosynthesis. Functionally, catalyzes the thiamine diphosphate-dependent decarboxylation of 2-oxoglutarate and the subsequent addition of the resulting succinic semialdehyde-thiamine pyrophosphate anion to isochorismate to yield 2-succinyl-5-enolpyruvyl-6-hydroxy-3-cyclohexene-1-carboxylate (SEPHCHC). The chain is 2-succinyl-5-enolpyruvyl-6-hydroxy-3-cyclohexene-1-carboxylate synthase from Salmonella gallinarum (strain 287/91 / NCTC 13346).